The sequence spans 352 residues: Leukotriene B4 receptor 1 (352 aa).

Residues Met-1–Leu-19 are Extracellular-facing. N-linked (GlcNAc...) asparagine glycosylation occurs at Asn-2. The helical transmembrane segment at Leu-20 to Ser-42 threads the bilayer. Topologically, residues Ile-43 to Ala-54 are cytoplasmic. Residues Leu-55–Leu-75 form a helical membrane-spanning segment. Residues His-76–Arg-91 lie on the Extracellular side of the membrane. A helical transmembrane segment spans residues Leu-92–Leu-113. The Cytoplasmic segment spans residues Asp-114 to Leu-138. The helical transmembrane segment at Ala-139–Val-159 threads the bilayer. Over Pro-160–Arg-178 the chain is Extracellular. Asn-164 carries an N-linked (GlcNAc...) asparagine glycan. A helical transmembrane segment spans residues Ala-179–Ala-199. Residues Ser-200–Arg-221 are Cytoplasmic-facing. Residues Leu-222 to Leu-242 form a helical membrane-spanning segment. Over Ala-243–Asn-268 the chain is Extracellular. The helical transmembrane segment at Val-269 to Gly-289 threads the bilayer. Residues Gly-290–Asn-352 lie on the Cytoplasmic side of the membrane. Polar residues-rich tracts occupy residues Ser-310–Arg-326 and Glu-338–Asn-352. A disordered region spans residues Ser-310–Asn-352.

The protein belongs to the G-protein coupled receptor 1 family. In terms of processing, phosphorylated by GRK6 upon leukotriene B4 binding; which promotes desensitization. Expressed at highest levels in heart, skeletal muscle and at lower levels in brain and liver. High level of expression in lymphoid tissues.

The protein localises to the cell membrane. Its function is as follows. Receptor for extracellular ATP &gt; UTP and ADP. The activity of this receptor is mediated by G proteins which activate a phosphatidylinositol-calcium second messenger system. May be the cardiac P2Y receptor involved in the regulation of cardiac muscle contraction through modulation of L-type calcium currents. Is a receptor for leukotriene B4, a potent chemoattractant involved in inflammation and immune response. This chain is Leukotriene B4 receptor 1 (LTB4R), found in Homo sapiens (Human).